The sequence spans 564 residues: Dihydropyrimidinase-related protein 5 (564 aa).

Phosphothreonine occurs at positions 509 and 514. Phosphoserine occurs at positions 532 and 538. At arginine 559 the chain carries Omega-N-methylarginine.

It belongs to the metallo-dependent hydrolases superfamily. Hydantoinase/dihydropyrimidinase family. In terms of assembly, homotetramer, and heterotetramer with other DPYS-like proteins. Interacts with DPYSL2, DPYSL3 and DPYSL4. Interacts with MAP2 and TUBB3.

Its subcellular location is the cytoplasm. Its function is as follows. Involved in the negative regulation of dendrite outgrowth. This Homo sapiens (Human) protein is Dihydropyrimidinase-related protein 5 (DPYSL5).